Here is a 366-residue protein sequence, read N- to C-terminus: Galactoside alpha-(1,2)-fucosyltransferase 1 (366 aa).

The Cytoplasmic portion of the chain corresponds to 1-8 (MWPRSHRH). The chain crosses the membrane as a helical; Signal-anchor for type II membrane protein span at residues 9–25 (LCLAFLLVCVLSAISFL). The Lumenal segment spans residues 26-366 (IHFHQDSIRH…LSPLWPLAEP (341 aa)). Asn66, Asn302, and Asn328 each carry an N-linked (GlcNAc...) asparagine glycan.

Belongs to the glycosyltransferase 11 family.

The protein resides in the golgi apparatus. The protein localises to the golgi stack membrane. It catalyses the reaction a beta-D-galactosyl-(1-&gt;4)-N-acetyl-beta-D-glucosaminyl derivative + GDP-beta-L-fucose = an alpha-L-Fuc-(1-&gt;2)-beta-D-Gal-(1-&gt;4)-beta-D-GlcNAc derivative + GDP + H(+). The catalysed reaction is a ganglioside GA1 + GDP-beta-L-fucose = a ganglioside Fuc-GA1 + GDP + H(+). The enzyme catalyses a beta-D-Gal-(1-&gt;3)-beta-D-GlcNAc-(1-&gt;3)-beta-D-Gal-(1-&gt;4)-beta-D-Glc-(1&lt;-&gt;1')-Cer(d18:1(4E)) + GDP-beta-L-fucose = alpha-L-fucosyl-(1-&gt;2)- beta-D-galactosyl-(1-&gt;3)-N-acetyl-beta-D-glucosaminyl-(1-&gt;3)-beta-D-galactosyl-(1-&gt;4)-beta-D-glucosyl-(1&lt;-&gt;1')-N-acylsphing-4-enine + GDP + H(+). It carries out the reaction a neolactoside nLc4Cer(d18:1(4E)) + GDP-beta-L-fucose = a neolactoside IV(2)-alpha-Fuc-nLc4Cer(d18:1(4E)) + GDP + H(+). It catalyses the reaction a ganglioside GM1 + GDP-beta-L-fucose = a ganglioside Fuc-GM1 + GDP + H(+). The catalysed reaction is beta-D-galactosyl-(1-&gt;3)-N-acetyl-D-galactosamine + GDP-beta-L-fucose = alpha-L-fucosyl-(1-&gt;2)-beta-D-galactosyl-(1-&gt;3)-N-acetyl-D-galactosamine + GDP + H(+). It participates in protein modification; protein glycosylation. Catalyzes the transfer of L-fucose, from a guanosine diphosphate-beta-L-fucose, to the terminal galactose residue of glycoconjugates through an alpha(1,2) linkage leading to H antigen synthesis that is an intermediate substrate in the synthesis of ABO blood group antigens. H antigen is essential for maturation of the glomerular layer of the main olfactory bulb, in cell migration and early cell-cell contacts during tumor associated angiogenesis. Preferentially fucosylates soluble lactose and to a lesser extent fucosylates glycolipids gangliosides GA1 and GM1a. The protein is Galactoside alpha-(1,2)-fucosyltransferase 1 of Saimiri sciureus (Common squirrel monkey).